Reading from the N-terminus, the 318-residue chain is Holliday junction branch migration complex subunit RuvB (318 aa).

The tract at residues 1–168 is large ATPase domain (RuvB-L); that stretch reads MPENLEIRPS…FGYVAKIVDY (168 aa). The ATP site is built by I7, R8, G49, K52, T53, T54, R158, Y168, and R205. T53 lines the Mg(2+) pocket. The interval 169-239 is small ATPAse domain (RuvB-S); that stretch reads TLEDMIQIIR…IVNKTFDSIG (71 aa). Residues 242 to 318 form a head domain (RuvB-H) region; it reads NQGLSQINIE…RDYLLELKTN (77 aa). Residues R278, K297, and R302 each contribute to the DNA site.

Belongs to the RuvB family. Homohexamer. Forms an RuvA(8)-RuvB(12)-Holliday junction (HJ) complex. HJ DNA is sandwiched between 2 RuvA tetramers; dsDNA enters through RuvA and exits via RuvB. An RuvB hexamer assembles on each DNA strand where it exits the tetramer. Each RuvB hexamer is contacted by two RuvA subunits (via domain III) on 2 adjacent RuvB subunits; this complex drives branch migration. In the full resolvosome a probable DNA-RuvA(4)-RuvB(12)-RuvC(2) complex forms which resolves the HJ.

The protein localises to the cytoplasm. The enzyme catalyses ATP + H2O = ADP + phosphate + H(+). Functionally, the RuvA-RuvB-RuvC complex processes Holliday junction (HJ) DNA during genetic recombination and DNA repair, while the RuvA-RuvB complex plays an important role in the rescue of blocked DNA replication forks via replication fork reversal (RFR). RuvA specifically binds to HJ cruciform DNA, conferring on it an open structure. The RuvB hexamer acts as an ATP-dependent pump, pulling dsDNA into and through the RuvAB complex. RuvB forms 2 homohexamers on either side of HJ DNA bound by 1 or 2 RuvA tetramers; 4 subunits per hexamer contact DNA at a time. Coordinated motions by a converter formed by DNA-disengaged RuvB subunits stimulates ATP hydrolysis and nucleotide exchange. Immobilization of the converter enables RuvB to convert the ATP-contained energy into a lever motion, pulling 2 nucleotides of DNA out of the RuvA tetramer per ATP hydrolyzed, thus driving DNA branch migration. The RuvB motors rotate together with the DNA substrate, which together with the progressing nucleotide cycle form the mechanistic basis for DNA recombination by continuous HJ branch migration. Branch migration allows RuvC to scan DNA until it finds its consensus sequence, where it cleaves and resolves cruciform DNA. The polypeptide is Holliday junction branch migration complex subunit RuvB (Mesomycoplasma hyopneumoniae (strain 232) (Mycoplasma hyopneumoniae)).